A 266-amino-acid polypeptide reads, in one-letter code: ATG8-interacting protein 2 (266 aa).

The short motif at 14-17 (WEVV) is the AIM (Atg8-family-interacting motif) element. A helical membrane pass occupies residues 191-210 (TNTVWSICIAAAVMGIVILG). The AIM (Atg8-family-interacting motif) motif lies at 218-221 (WQIL).

In terms of assembly, interacts with ATG8F.

The protein localises to the endoplasmic reticulum membrane. The protein resides in the membrane. May be involved in salt stress-induced vesicle-to-vacuole trafficking pathway. Through its interaction with ATG8F, may enable delivery of the vesicle bodies to the vacuole by an autophagic pathway. Plays a role in seed germination in response to exogenous abscisic acid (ABA) treatment. The polypeptide is ATG8-interacting protein 2 (Arabidopsis thaliana (Mouse-ear cress)).